An 86-amino-acid chain; its full sequence is Weak neurotoxin 6 (86 aa).

The N-terminal stretch at 1-21 (MKTLLLTLVVVTIVCLDLGYT) is a signal peptide. 5 cysteine pairs are disulfide-bonded: C24-C45, C27-C32, C38-C63, C67-C78, and C79-C84.

This sequence belongs to the three-finger toxin family. Ancestral subfamily. Orphan group II sub-subfamily. In terms of tissue distribution, expressed by the venom gland.

Its subcellular location is the secreted. In terms of biological role, binds with low affinity to muscular (alpha-1-beta-1-delta-epsilon/CHRNA1-CHRNB1-CHRND-CHRNE) and very low affinity to neuronal (alpha-7/CHRNA7) nicotinic acetylcholine receptor (nAChR). The polypeptide is Weak neurotoxin 6 (Naja sputatrix (Malayan spitting cobra)).